A 200-amino-acid chain; its full sequence is LHFPL tetraspan subfamily member 6 protein (200 aa).

A signal peptide spans 1–23 (MASSLTCTGVIWALLSFLSAATS). 3 helical membrane passes run 84 to 104 (ICTIVTGLGCGLLLLVALTAL), 123 to 143 (GIQFLGGLLIGAGCALYPLGW), and 166 to 186 (IGWAYYCTGAGAAAAMLLCTW).

It belongs to the LHFP family.

The protein resides in the membrane. This chain is LHFPL tetraspan subfamily member 6 protein, found in Rattus norvegicus (Rat).